Here is a 261-residue protein sequence, read N- to C-terminus: Type III pantothenate kinase (261 aa).

6 to 13 lines the ATP pocket; it reads DVGNTNTV. Substrate is bound at residue 107–110; the sequence is GADR. Residue aspartate 109 is the Proton acceptor of the active site. Aspartate 129 serves as a coordination point for K(+). Residue threonine 132 participates in ATP binding. Substrate is bound at residue threonine 183.

The protein belongs to the type III pantothenate kinase family. As to quaternary structure, homodimer. NH4(+) is required as a cofactor. Requires K(+) as cofactor.

It is found in the cytoplasm. It catalyses the reaction (R)-pantothenate + ATP = (R)-4'-phosphopantothenate + ADP + H(+). The protein operates within cofactor biosynthesis; coenzyme A biosynthesis; CoA from (R)-pantothenate: step 1/5. Catalyzes the phosphorylation of pantothenate (Pan), the first step in CoA biosynthesis. The polypeptide is Type III pantothenate kinase (Kosmotoga olearia (strain ATCC BAA-1733 / DSM 21960 / TBF 19.5.1)).